Reading from the N-terminus, the 599-residue chain is Elongation factor 4 (599 aa).

Residues 5 to 187 enclose the tr-type G domain; that stretch reads SHIRNFSIIA…HLVRVIPPPQ (183 aa). GTP is bound by residues 17–22 and 134–137; these read DHGKST and NKMD.

It belongs to the TRAFAC class translation factor GTPase superfamily. Classic translation factor GTPase family. LepA subfamily.

It localises to the cell inner membrane. It catalyses the reaction GTP + H2O = GDP + phosphate + H(+). Functionally, required for accurate and efficient protein synthesis under certain stress conditions. May act as a fidelity factor of the translation reaction, by catalyzing a one-codon backward translocation of tRNAs on improperly translocated ribosomes. Back-translocation proceeds from a post-translocation (POST) complex to a pre-translocation (PRE) complex, thus giving elongation factor G a second chance to translocate the tRNAs correctly. Binds to ribosomes in a GTP-dependent manner. The polypeptide is Elongation factor 4 (Azotobacter vinelandii (strain DJ / ATCC BAA-1303)).